Reading from the N-terminus, the 1232-residue chain is Anoctamin-8 (1232 aa).

The segment at 1-32 (MAEAASGAGGTSLEGERGKRPPPEGEPAAPAS) is disordered. Position 2 is an N-acetylalanine (A2). The Extracellular segment spans residues 2–244 (AEAASGAGGT…DDICDYFGVK (243 aa)). Residues 14 to 23 (EGERGKRPPP) show a composition bias toward basic and acidic residues. The helical transmembrane segment at 245–265 (IAMYFAWLGFYTSAMVYPAVF) threads the bilayer. Over 266–281 (GSVLYTFTEADQTSRD) the chain is Cytoplasmic. Residues 282–302 (VSCVVFALFNVIWSTLFLEEW) form a helical membrane-spanning segment. The Extracellular segment spans residues 303-356 (KRRGAELAYKWGTLDSPGEAVEEPRPQFRGVRRISPITRAEEFYYPPWKRLLFQ). S318 is subject to Phosphoserine. Residues 357–377 (LLVSLPLCLACLVCVFLLMLG) form a helical membrane-spanning segment. Residues 378-400 (CFQLQELVLSVKGLPRLARFLPK) lie on the Cytoplasmic side of the membrane. The chain crosses the membrane as a helical span at residues 401–421 (VMLALLVSVSAEGYKKLAIWL). Residues 422-437 (NDMENYRLESAYEKHL) lie on the Extracellular side of the membrane. A helical transmembrane segment spans residues 438 to 458 (IIKVVLFQFVNSYLSLFYIGF). At 459–750 (YLKDMERLKE…YEDTFQDYQE (292 aa)) the chain is on the cytoplasmic side. The tract at residues 524–650 (RRLEPQADEG…SPTMVEKGLE (127 aa)) is disordered. Gly residues predominate over residues 532–551 (EGGGGGSGGGGRRCLSGGCG). Over residues 582–606 (EEDEDDEEEEDEEEEEDEEEGEEGG) the composition is skewed to acidic residues. S669 carries the phosphoserine modification. The interval 681-728 (RAGGEGRDQGPDGGPDPEPGSNSDSTRRQRRQNRSSWIDPPEEEHSPQ) is disordered. Residues 751–771 (MFVQFGYVVLFSSAFPLAALC) form a helical membrane-spanning segment. Over 772–807 (ALVNNLIEIRSDAFKLCTGLQRPFGQRVESIGQWQK) the chain is Extracellular. At S801 the chain carries Phosphoserine; by FAM20C. A helical transmembrane segment spans residues 808–828 (VMEAMGVLAIVVNCYLIGQCG). The Cytoplasmic segment spans residues 829 to 841 (QLQRLFPWLSPEA). The chain crosses the membrane as a helical span at residues 842–862 (AIVSVVVLEHFALLLKYLIHV). The Extracellular segment spans residues 863-1232 (AIPDIPGWVA…QAVCWPSGWH (370 aa)). Disordered regions lie at residues 888 to 970 (RHER…GSLL), 997 to 1152 (LAAA…WQWD), and 1174 to 1232 (PPCA…SGWH). Positions 904 to 932 (RREEEERQRHAEHHARREHDSGGREEARA) are enriched in basic and acidic residues. Low complexity-rich tracts occupy residues 933–953 (EGSGLDPATSSEKASAKAKGS) and 997–1006 (LAAAGAGATT). Asymmetric dimethylarginine; alternate is present on R1020. R1020 carries the omega-N-methylarginine; alternate modification. Residues 1031-1043 (KSPETRRDSERSH) are compositionally biased toward basic and acidic residues. Positions 1078–1087 (TPSSGSSRVQ) are enriched in polar residues. Pro residues-rich tracts occupy residues 1130–1145 (PAPPPPMPLPRPPTPP) and 1197–1221 (LPPPPLPPTSDPLETPAPSPSPSPS).

Belongs to the anoctamin family. As to expression, expressed in embryonic stem cells, fetal brain and neural tissues.

It is found in the cell membrane. Its function is as follows. Does not exhibit calcium-activated chloride channel (CaCC) activity. This chain is Anoctamin-8 (ANO8), found in Homo sapiens (Human).